We begin with the raw amino-acid sequence, 240 residues long: Fibronectin type III domain-containing protein 5 (240 aa).

A compositionally biased stretch (gly residues) spans 1–10 (MQAARGGAGR). The interval 1-33 (MQAARGGAGRPGREGRGLERECERSPGPGVAMP) is disordered. The span at 11-24 (PGREGRGLERECER) shows a compositional bias: basic and acidic residues. A Fibronectin type-III domain is found at 64–155 (APVNVTVRHL…EPVLFKTPRE (92 aa)). N-linked (GlcNAc...) asparagine glycans are attached at residues asparagine 67 and asparagine 112. A helical transmembrane segment spans residues 181-201 (GEVLIIVVVLFMWAGVIALFC). The segment covering 210–221 (NEPNNNKEKTKS) has biased composition (basic and acidic residues). Residues 210-240 (NEPNNNKEKTKSASETSTPEHQGGGLLRSKI) form a disordered region. A compositionally biased stretch (gly residues) spans 231-240 (QGGGLLRSKI). Residues 238–240 (SKI) carry the Microbody targeting signal motif.

In terms of assembly, dimer; may exist in other oligomeric forms. Post-translationally, the extracellular domain is cleaved and released from the cell membrane. N-Glycosylated. In adult, it is highly expressed in skeletal muscle, heart and brain.

The protein localises to the cell membrane. It is found in the peroxisome membrane. The protein resides in the secreted. Its function is as follows. Mediates beneficial effects of muscular exercise. Induces browning of white adipose tissue by stimulating UCP1 expression, at least in part, via the nuclear receptor PPARA. This is Fibronectin type III domain-containing protein 5 (Fndc5) from Mus musculus (Mouse).